Consider the following 101-residue polypeptide: Aspartyl/glutamyl-tRNA(Asn/Gln) amidotransferase subunit C (101 aa).

It belongs to the GatC family. Heterotrimer of A, B and C subunits.

It catalyses the reaction L-glutamyl-tRNA(Gln) + L-glutamine + ATP + H2O = L-glutaminyl-tRNA(Gln) + L-glutamate + ADP + phosphate + H(+). It carries out the reaction L-aspartyl-tRNA(Asn) + L-glutamine + ATP + H2O = L-asparaginyl-tRNA(Asn) + L-glutamate + ADP + phosphate + 2 H(+). In terms of biological role, allows the formation of correctly charged Asn-tRNA(Asn) or Gln-tRNA(Gln) through the transamidation of misacylated Asp-tRNA(Asn) or Glu-tRNA(Gln) in organisms which lack either or both of asparaginyl-tRNA or glutaminyl-tRNA synthetases. The reaction takes place in the presence of glutamine and ATP through an activated phospho-Asp-tRNA(Asn) or phospho-Glu-tRNA(Gln). The chain is Aspartyl/glutamyl-tRNA(Asn/Gln) amidotransferase subunit C from Lactococcus lactis subsp. cremoris (strain MG1363).